Reading from the N-terminus, the 128-residue chain is Fluoride-specific ion channel FluC (128 aa).

Helical transmembrane passes span Ile5–Gly25, Leu35–Phe55, Leu67–Val87, and Phe96–Leu116. The Na(+) site is built by Gly75 and Thr78.

Belongs to the fluoride channel Fluc/FEX (TC 1.A.43) family.

Its subcellular location is the cell inner membrane. The enzyme catalyses fluoride(in) = fluoride(out). Its activity is regulated as follows. Na(+) is not transported, but it plays an essential structural role and its presence is essential for fluoride channel function. Its function is as follows. Fluoride-specific ion channel. Important for reducing fluoride concentration in the cell, thus reducing its toxicity. This chain is Fluoride-specific ion channel FluC, found in Burkholderia thailandensis (strain ATCC 700388 / DSM 13276 / CCUG 48851 / CIP 106301 / E264).